Consider the following 176-residue polypeptide: MSRVGKSPIALQGAEVKLADGAITVKGPLGTITQAINPLVNVANNDGTLNLSPVDESREANALSGTMRAIIANAVHGVTKGFERKLTLVGVGYRAQAQGDKLNLSLGFSHPVVHQMPEGVKAETPTQTEIVIKGINKQQVGQVAAEVRGYRPPEPYKGKGVRYADEVVILKETKKK.

It belongs to the universal ribosomal protein uL6 family. Part of the 50S ribosomal subunit.

Its function is as follows. This protein binds to the 23S rRNA, and is important in its secondary structure. It is located near the subunit interface in the base of the L7/L12 stalk, and near the tRNA binding site of the peptidyltransferase center. The chain is Large ribosomal subunit protein uL6 from Burkholderia cenocepacia (strain HI2424).